A 592-amino-acid polypeptide reads, in one-letter code: Aspartate--tRNA ligase (592 aa).

An L-aspartate-binding site is contributed by Glu173. An aspartate region spans residues 197–200; sequence QLFK. Position 219 (Arg219) interacts with L-aspartate. ATP contacts are provided by residues 219–221 and Gln228; that span reads RDE. Residue His449 coordinates L-aspartate. Glu483 contacts ATP. Residue Arg490 coordinates L-aspartate. 535–538 is an ATP binding site; the sequence is GLDR.

It belongs to the class-II aminoacyl-tRNA synthetase family. Type 1 subfamily. In terms of assembly, homodimer.

The protein localises to the cytoplasm. It catalyses the reaction tRNA(Asp) + L-aspartate + ATP = L-aspartyl-tRNA(Asp) + AMP + diphosphate. Its function is as follows. Catalyzes the attachment of L-aspartate to tRNA(Asp) in a two-step reaction: L-aspartate is first activated by ATP to form Asp-AMP and then transferred to the acceptor end of tRNA(Asp). The polypeptide is Aspartate--tRNA ligase (Shewanella loihica (strain ATCC BAA-1088 / PV-4)).